Reading from the N-terminus, the 149-residue chain is Large ribosomal subunit protein bL9 (149 aa).

It belongs to the bacterial ribosomal protein bL9 family.

Functionally, binds to the 23S rRNA. In Mycoplasma pneumoniae (strain ATCC 29342 / M129 / Subtype 1) (Mycoplasmoides pneumoniae), this protein is Large ribosomal subunit protein bL9.